A 348-amino-acid chain; its full sequence is Dihydroorotate dehydrogenase (quinone) (348 aa).

Residues A60 to K64 and T84 each bind FMN. K64 is a binding site for substrate. N109–F113 contacts substrate. FMN contacts are provided by N138 and N169. Substrate is bound at residue N169. S172 serves as the catalytic Nucleophile. N174 contributes to the substrate binding site. Residues K207 and S235 each coordinate FMN. Substrate is bound at residue N236–T237. FMN contacts are provided by residues G258, G287, and Y308 to S309.

It belongs to the dihydroorotate dehydrogenase family. Type 2 subfamily. In terms of assembly, monomer. FMN serves as cofactor.

The protein resides in the cell membrane. The catalysed reaction is (S)-dihydroorotate + a quinone = orotate + a quinol. The protein operates within pyrimidine metabolism; UMP biosynthesis via de novo pathway; orotate from (S)-dihydroorotate (quinone route): step 1/1. Functionally, catalyzes the conversion of dihydroorotate to orotate with quinone as electron acceptor. This chain is Dihydroorotate dehydrogenase (quinone), found in Parvibaculum lavamentivorans (strain DS-1 / DSM 13023 / NCIMB 13966).